Reading from the N-terminus, the 190-residue chain is Small ribosomal subunit protein uS4 (190 aa).

One can recognise an S4 RNA-binding domain in the interval 106–178 (RRLQTVVFKH…GRVKRVKRNA (73 aa)). Residues 166 to 190 (GRPGRVKRVKRNAAKKGSGGGDDDE) are disordered. The segment covering 169–179 (GRVKRVKRNAA) has biased composition (basic residues).

Belongs to the universal ribosomal protein uS4 family.

This is Small ribosomal subunit protein uS4 from Trypanosoma brucei brucei.